Here is a 641-residue protein sequence, read N- to C-terminus: 1-deoxy-D-xylulose-5-phosphate synthase (641 aa).

Thiamine diphosphate is bound by residues histidine 79 and 120 to 122; that span reads GHS. A Mg(2+)-binding site is contributed by aspartate 151. Residues 152–153, asparagine 180, tyrosine 291, and glutamate 375 contribute to the thiamine diphosphate site; that span reads GS. Residue asparagine 180 coordinates Mg(2+).

This sequence belongs to the transketolase family. DXPS subfamily. Homodimer. Requires Mg(2+) as cofactor. Thiamine diphosphate serves as cofactor.

The catalysed reaction is D-glyceraldehyde 3-phosphate + pyruvate + H(+) = 1-deoxy-D-xylulose 5-phosphate + CO2. It functions in the pathway metabolic intermediate biosynthesis; 1-deoxy-D-xylulose 5-phosphate biosynthesis; 1-deoxy-D-xylulose 5-phosphate from D-glyceraldehyde 3-phosphate and pyruvate: step 1/1. In terms of biological role, catalyzes the acyloin condensation reaction between C atoms 2 and 3 of pyruvate and glyceraldehyde 3-phosphate to yield 1-deoxy-D-xylulose-5-phosphate (DXP). This chain is 1-deoxy-D-xylulose-5-phosphate synthase, found in Nitratidesulfovibrio vulgaris (strain ATCC 29579 / DSM 644 / CCUG 34227 / NCIMB 8303 / VKM B-1760 / Hildenborough) (Desulfovibrio vulgaris).